The sequence spans 316 residues: LIM/homeobox protein lim-6 (316 aa).

LIM zinc-binding domains lie at 40-101 (KLCS…LYGK) and 102-163 (RCRR…ICNF). The segment at residues 186–245 (PKRPRTILNAQQRRQFKTAFERSSKPSRKVREQLANETGLSVRVVQVWFQNQRAKIKKLN) is a DNA-binding region (homeobox). Residues 244-297 (LNKKDSDSGDTFKHGPGSEGRSTEDIRSSDDEEESVINLDADEVETSETSSYTD) are disordered. A compositionally biased stretch (basic and acidic residues) spans 246 to 256 (KKDSDSGDTFK). Positions 273–289 (DDEEESVINLDADEVET) are enriched in acidic residues.

Its subcellular location is the nucleus. Transcription factor. Required for the terminal differentiation of sensory- and motor-neurons, especially GABAergic neurons, and for morphological aspects of uterine development. Plays a role in the cell-type-specific regulation of glutamic acid decarboxylase unc-25. Involved in promoting sleep-like behavioral quiescence, acting by modulating expression of transcription factor aptf-1 in the single sleep-active ring interneuron RIS. Plays a role in regulation of RIS differentiation. Required for the functional asymmetry of the ASER and ASEL chemosensory neuron pair, conferring the ability to discriminate sodium from chloride, perhaps by modulating expression of receptor-type guanylate cyclases, such as gcy-5. Involved in regulating postembryonic axon maintenance in the ventral nerve cord, acting in concert with LIM homeobox protein ceh-14, via modulation of expression of immunoglobulin domain zig genes in the interneuron PVT. May play a role in the functions of the excretory gland cell. The chain is LIM/homeobox protein lim-6 from Caenorhabditis elegans.